A 483-amino-acid polypeptide reads, in one-letter code: Siroheme synthase (483 aa).

The segment at 1–203 is precorrin-2 dehydrogenase /sirohydrochlorin ferrochelatase; sequence MNYFPIFANL…RQNTLAEREL (203 aa). NAD(+)-binding positions include 22–23 and 43–44; these read AV and KH. A Phosphoserine modification is found at serine 128. The segment at 217-483 is uroporphyrinogen-III C-methyltransferase; that stretch reads GSVSLVGAGP…GGLNAGQRAA (267 aa). Proline 226 contributes to the S-adenosyl-L-methionine binding site. Aspartate 249 serves as the catalytic Proton acceptor. Lysine 271 serves as the catalytic Proton donor. S-adenosyl-L-methionine-binding positions include 302 to 304, valine 307, 332 to 333, methionine 384, and glycine 413; these read GGD and TA.

In the N-terminal section; belongs to the precorrin-2 dehydrogenase / sirohydrochlorin ferrochelatase family. This sequence in the C-terminal section; belongs to the precorrin methyltransferase family.

It catalyses the reaction uroporphyrinogen III + 2 S-adenosyl-L-methionine = precorrin-2 + 2 S-adenosyl-L-homocysteine + H(+). The enzyme catalyses precorrin-2 + NAD(+) = sirohydrochlorin + NADH + 2 H(+). The catalysed reaction is siroheme + 2 H(+) = sirohydrochlorin + Fe(2+). Its pathway is cofactor biosynthesis; adenosylcobalamin biosynthesis; precorrin-2 from uroporphyrinogen III: step 1/1. The protein operates within cofactor biosynthesis; adenosylcobalamin biosynthesis; sirohydrochlorin from precorrin-2: step 1/1. It functions in the pathway porphyrin-containing compound metabolism; siroheme biosynthesis; precorrin-2 from uroporphyrinogen III: step 1/1. It participates in porphyrin-containing compound metabolism; siroheme biosynthesis; siroheme from sirohydrochlorin: step 1/1. Its pathway is porphyrin-containing compound metabolism; siroheme biosynthesis; sirohydrochlorin from precorrin-2: step 1/1. Functionally, multifunctional enzyme that catalyzes the SAM-dependent methylations of uroporphyrinogen III at position C-2 and C-7 to form precorrin-2 via precorrin-1. Then it catalyzes the NAD-dependent ring dehydrogenation of precorrin-2 to yield sirohydrochlorin. Finally, it catalyzes the ferrochelation of sirohydrochlorin to yield siroheme. This Neisseria meningitidis serogroup B (strain ATCC BAA-335 / MC58) protein is Siroheme synthase.